The primary structure comprises 282 residues: Aldo-keto reductase MT3049 (282 aa).

The active-site Proton donor is tyrosine 57. Residues leucine 197, valine 235, arginine 237, serine 238, alanine 239, arginine 243, serine 246, asparagine 247, and arginine 273 each contribute to the NADPH site.

The protein belongs to the aldo/keto reductase family.

In Mycobacterium tuberculosis (strain CDC 1551 / Oshkosh), this protein is Aldo-keto reductase MT3049.